A 305-amino-acid polypeptide reads, in one-letter code: tRNA dimethylallyltransferase (305 aa).

12 to 19 provides a ligand contact to ATP; the sequence is GPTASGKT. 14–19 is a substrate binding site; sequence TASGKT. 3 interaction with substrate tRNA regions span residues 37-40, 161-165, and 242-247; these read DSAL, QRLAR, and RCVGYR.

The protein belongs to the IPP transferase family. Monomer. Mg(2+) serves as cofactor.

The enzyme catalyses adenosine(37) in tRNA + dimethylallyl diphosphate = N(6)-dimethylallyladenosine(37) in tRNA + diphosphate. In terms of biological role, catalyzes the transfer of a dimethylallyl group onto the adenine at position 37 in tRNAs that read codons beginning with uridine, leading to the formation of N6-(dimethylallyl)adenosine (i(6)A). In Psychromonas ingrahamii (strain DSM 17664 / CCUG 51855 / 37), this protein is tRNA dimethylallyltransferase.